Here is a 104-residue protein sequence, read N- to C-terminus: MSNYAIIKTGGKQVKVEEGSVIYVEKLNVEAGQTVTFDEVIFVGGETTKVGAPLVEGATVVGEVEKHGKQKKVVTFQYKPKKHSHRKQGHRQPYTKVVIKSVNA.

This sequence belongs to the bacterial ribosomal protein bL21 family. In terms of assembly, part of the 50S ribosomal subunit. Contacts protein L20.

This protein binds to 23S rRNA in the presence of protein L20. The polypeptide is Large ribosomal subunit protein bL21 (Lactococcus lactis subsp. cremoris (strain MG1363)).